A 141-amino-acid polypeptide reads, in one-letter code: Hemoglobin subunit alpha (141 aa).

Positions 1–141 (VLSAKDKTNI…VSTVLTSKYR (141 aa)) constitute a Globin domain. Ser3 is subject to Phosphoserine. Lys7 is modified (N6-succinyllysine). Thr8 bears the Phosphothreonine mark. Lys16 carries the post-translational modification N6-acetyllysine; alternate. Lys16 is subject to N6-succinyllysine; alternate. Tyr24 is subject to Phosphotyrosine. Position 40 is an N6-succinyllysine (Lys40). Ser49 is subject to Phosphoserine. His58 serves as a coordination point for O2. A heme b-binding site is contributed by His87. Residue Ser102 is modified to Phosphoserine. A Phosphothreonine modification is found at Thr108. Phosphoserine occurs at positions 124 and 131. Residues Thr134 and Thr137 each carry the phosphothreonine modification. Ser138 bears the Phosphoserine mark.

It belongs to the globin family. In terms of assembly, heterotetramer of two alpha chains and two beta chains. Red blood cells.

Its function is as follows. Involved in oxygen transport from the lung to the various peripheral tissues. Hemopressin acts as an antagonist peptide of the cannabinoid receptor CNR1. Hemopressin-binding efficiently blocks cannabinoid receptor CNR1 and subsequent signaling. This is Hemoglobin subunit alpha (HBA) from Mesocricetus auratus (Golden hamster).